Consider the following 205-residue polypeptide: Small ribosomal subunit protein uS4 (205 aa).

Residues serine 94–isoleucine 157 enclose the S4 RNA-binding domain.

Belongs to the universal ribosomal protein uS4 family. As to quaternary structure, part of the 30S ribosomal subunit. Contacts protein S5. The interaction surface between S4 and S5 is involved in control of translational fidelity.

Functionally, one of the primary rRNA binding proteins, it binds directly to 16S rRNA where it nucleates assembly of the body of the 30S subunit. In terms of biological role, with S5 and S12 plays an important role in translational accuracy. The protein is Small ribosomal subunit protein uS4 of Rickettsia typhi (strain ATCC VR-144 / Wilmington).